The chain runs to 880 residues: Valine--tRNA ligase (880 aa).

The short motif at 49-59 is the 'HIGH' region element; sequence PNVTGRLHLGH. The 'KMSKS' region signature appears at 525–529; the sequence is KMSKS. ATP is bound at residue Lys-528. The stretch at 809 to 879 forms a coiled coil; the sequence is LEGLINIDEE…AVQKRMAELK (71 aa).

This sequence belongs to the class-I aminoacyl-tRNA synthetase family. ValS type 1 subfamily. Monomer.

It is found in the cytoplasm. It carries out the reaction tRNA(Val) + L-valine + ATP = L-valyl-tRNA(Val) + AMP + diphosphate. In terms of biological role, as ValRS can inadvertently accommodate and process structurally similar amino acids such as threonine, to avoid such errors, it has a 'posttransfer' editing activity that hydrolyzes mischarged Thr-tRNA(Val) in a tRNA-dependent manner. Catalyzes the attachment of valine to tRNA(Val). In Bacillus subtilis (strain 168), this protein is Valine--tRNA ligase.